Here is a 173-residue protein sequence, read N- to C-terminus: Co-chaperone protein HscB homolog (173 aa).

In terms of domain architecture, J spans 5–77 (SHFALFDLEP…SQRARYLLSL (73 aa)).

Belongs to the HscB family. Interacts with HscA and stimulates its ATPase activity.

Its function is as follows. Co-chaperone involved in the maturation of iron-sulfur cluster-containing proteins. Seems to help targeting proteins to be folded toward HscA. In Azotobacter vinelandii (strain DJ / ATCC BAA-1303), this protein is Co-chaperone protein HscB homolog.